The chain runs to 354 residues: Ion-translocating oxidoreductase complex subunit D (354 aa).

Helical transmembrane passes span 19–39 (IMLL…YYFG), 40–60 (FGVL…EFLV), 77–99 (AAVT…LSFF), and 119–139 (IFNP…ILMT). Residue threonine 187 is modified to FMN phosphoryl threonine. 5 consecutive transmembrane segments (helical) span residues 221–241 (WISI…FNVI), 245–265 (IPVS…YFFK), 268–288 (MYYP…FFIA), 295–315 (SITK…IWLI), and 319–339 (GNYP…VPLI).

Belongs to the NqrB/RnfD family. In terms of assembly, the complex is composed of six subunits: RnfA, RnfB, RnfC, RnfD, RnfE and RnfG. FMN is required as a cofactor.

Its subcellular location is the cell inner membrane. Part of a membrane-bound complex that couples electron transfer with translocation of ions across the membrane. In Buchnera aphidicola subsp. Baizongia pistaciae (strain Bp), this protein is Ion-translocating oxidoreductase complex subunit D.